A 324-amino-acid chain; its full sequence is Methionyl-tRNA formyltransferase (324 aa).

113-116 (SLLP) contributes to the (6S)-5,6,7,8-tetrahydrofolate binding site.

It belongs to the Fmt family.

It catalyses the reaction L-methionyl-tRNA(fMet) + (6R)-10-formyltetrahydrofolate = N-formyl-L-methionyl-tRNA(fMet) + (6S)-5,6,7,8-tetrahydrofolate + H(+). In terms of biological role, attaches a formyl group to the free amino group of methionyl-tRNA(fMet). The formyl group appears to play a dual role in the initiator identity of N-formylmethionyl-tRNA by promoting its recognition by IF2 and preventing the misappropriation of this tRNA by the elongation apparatus. This is Methionyl-tRNA formyltransferase from Bacteroides fragilis (strain ATCC 25285 / DSM 2151 / CCUG 4856 / JCM 11019 / LMG 10263 / NCTC 9343 / Onslow / VPI 2553 / EN-2).